The chain runs to 70 residues: Protein FlmC homolog (70 aa).

Positions M1–E21 are disordered.

In Escherichia coli, this protein is Protein FlmC homolog.